A 551-amino-acid chain; its full sequence is MEEAELVKGRLQAITDKRKIQEEISQKRLKIEEDKLKHQHLKKKALREKWLLDGISSGKEQEEMKKQNQQDQHQIQVLEQSILRLEKEIQDLEKAELQISTKEEAILKKLKSIERTTEDIIRSVKVEREERAEESIEDIYANIPDLPKSYIPSRLRKEINEEKEDDEQNRKALYAMEIKVEKDLKTGESTVLSSIPLPSDDFKGTGIKVYDDGQKSVYAVSSNHSAAYNGTDGLAPVEVEELLRQASERNSKSPTEYHEPVYANPFYRPTTPQRETVTPGPNFQERIKIKTNGLGIGVNESIHNMGNGLSEERGNNFNHISPIPPVPHPRSVIQQAEEKLHTPQKRLMTPWEESNVMQDKDAPSPKPRLSPRETIFGKSEHQNSSPTCQEDEEDVRYNIVHSLPPDINDTEPVTMIFMGYQQAEDSEEDKKFLTGYDGIIHAELVVIDDEEEEDEGEAEKPSYHPIAPHSQVYQPAKPTPLPRKRSEASPHENTNHKSPHKNSISLKEQEESLGSPVHHSPFDAQTTGDGTEDPSLTALRMRMAKLGKKVI.

Met1 is modified (N-acetylmethionine). A coiled-coil region spans residues 12 to 106; sequence QAITDKRKIQ…LQISTKEEAI (95 aa). Lys125 is covalently cross-linked (Glycyl lysine isopeptide (Lys-Gly) (interchain with G-Cter in SUMO2)). Residue Ser135 is modified to Phosphoserine. Lys179 is covalently cross-linked (Glycyl lysine isopeptide (Lys-Gly) (interchain with G-Cter in SUMO1); alternate). Lys179 is covalently cross-linked (Glycyl lysine isopeptide (Lys-Gly) (interchain with G-Cter in SUMO2); alternate). Positions 248-259 are enriched in basic and acidic residues; the sequence is ERNSKSPTEYHE. The segment at 248 to 280 is disordered; the sequence is ERNSKSPTEYHEPVYANPFYRPTTPQRETVTPG. A compositionally biased stretch (polar residues) spans 270–280; the sequence is TTPQRETVTPG. Phosphothreonine is present on Thr271. Phosphoserine is present on residues Ser321, Ser370, Ser384, and Ser385. 2 disordered regions span residues 342–392 and 449–535; these read TPQK…QEDE and DEEE…EDPS. The span at 484 to 495 shows a compositional bias: basic and acidic residues; the sequence is KRSEASPHENTN. A phosphoserine mark is found at Ser498, Ser515, and Ser520.

This sequence belongs to the paralemmin family. As to quaternary structure, interacts with GLUL. Phosphorylated. Ubiquitous. Most abundant in cardiac and skeletal muscle.

Its subcellular location is the cytoplasm. It is found in the cell projection. It localises to the dendrite. The protein localises to the dendritic spine. In Homo sapiens (Human), this protein is Palmdelphin (PALMD).